The chain runs to 324 residues: Fructose-1,6-bisphosphatase class 1 (324 aa).

Mg(2+) contacts are provided by E88, D107, L109, and D110. Substrate-binding positions include 110–113 (DGSS), N199, and K265. Residue E271 coordinates Mg(2+).

It belongs to the FBPase class 1 family. Homotetramer. Mg(2+) serves as cofactor.

It is found in the cytoplasm. The catalysed reaction is beta-D-fructose 1,6-bisphosphate + H2O = beta-D-fructose 6-phosphate + phosphate. The protein operates within carbohydrate biosynthesis; gluconeogenesis. This Neisseria meningitidis serogroup C (strain 053442) protein is Fructose-1,6-bisphosphatase class 1.